The chain runs to 3122 residues: Laminin subunit alpha-2 (3122 aa).

Residues 1–22 (MPGAAGVLLLLLLSGGLGGVQA) form the signal peptide. The 252-residue stretch at 35 to 286 (QQRGLFPAVL…SVKDISVGGM (252 aa)) folds into the Laminin N-terminal domain. Asn55 and Asn89 each carry an N-linked (GlcNAc...) asparagine glycan. Intrachain disulfides connect Cys287–Cys296, Cys289–Cys307, Cys309–Cys318, Cys321–Cys341, Cys344–Cys353, and Cys346–Cys378. 4 consecutive Laminin EGF-like domains span residues 287-343 (CICY…ECEA), 344-413 (CNCH…PCQP), 414-468 (CHCD…DCKA), and 469-517 (CNCS…GCDE). Asn303 carries an N-linked (GlcNAc...) asparagine glycan. N-linked (GlcNAc...) asparagine glycans are attached at residues Asn363 and Asn380. 10 disulfides stabilise this stretch: Cys381-Cys390, Cys393-Cys411, Cys414-Cys426, Cys416-Cys442, Cys444-Cys453, Cys456-Cys466, Cys469-Cys482, Cys471-Cys486, Cys488-Cys497, and Cys500-Cys515. A glycan (N-linked (GlcNAc...) asparagine) is linked at Asn470. Residues 518-527 (CFCSGVSNRC) enclose the Laminin EGF-like 5; first part domain. Positions 531–723 (YWTYGKIQDM…DGSIAAAVEV (193 aa)) constitute a Laminin IV type A 1 domain. Residues 724–756 (CQCPPGYTGSSCESCWPRHRRVNGTIFGGICEP) form the Laminin EGF-like 5; second part domain. N-linked (GlcNAc...) asparagine glycosylation is present at Asn746. Cystine bridges form between Cys757/Cys766, Cys759/Cys773, Cys776/Cys785, Cys788/Cys804, Cys807/Cys822, Cys809/Cys832, Cys835/Cys844, Cys847/Cys862, Cys865/Cys879, Cys867/Cys886, Cys889/Cys898, Cys901/Cys915, Cys918/Cys930, Cys920/Cys937, Cys939/Cys948, Cys951/Cys964, Cys967/Cys979, Cys969/Cys985, Cys987/Cys996, Cys999/Cys1011, Cys1014/Cys1023, Cys1016/Cys1030, Cys1032/Cys1041, Cys1044/Cys1057, Cys1060/Cys1072, Cys1062/Cys1079, Cys1081/Cys1090, Cys1093/Cys1103, Cys1106/Cys1118, Cys1108/Cys1134, Cys1136/Cys1145, and Cys1148/Cys1163. 8 Laminin EGF-like domains span residues 757-806 (CQCF…DCQP), 807-864 (CACP…SCQP), 865-917 (CQCN…NCQP), 918-966 (CRCN…GCVP), 967-1013 (CNCN…GCTA), 1014-1059 (CECS…GCKA), 1060-1105 (CNCS…RCNL), and 1106-1165 (CDCF…GCSS). An N-linked (GlcNAc...) asparagine glycan is attached at Asn1061. The 10-residue stretch at 1166 to 1175 (CYCFGTTTQC) folds into the Laminin EGF-like 14; first part domain. Residues 1176–1379 (SEAKGLIRTW…MTPPADLIEK (204 aa)) enclose the Laminin IV type A 2 domain. Positions 1380–1419 (CDCPLGYSGLSCEACLPGFYRLRSQPGGRTPGPTLGTCVP) constitute a Laminin EGF-like 14; second part domain. 12 disulfides stabilise this stretch: Cys1420-Cys1429, Cys1422-Cys1436, Cys1439-Cys1448, Cys1451-Cys1466, Cys1469-Cys1484, Cys1471-Cys1494, Cys1497-Cys1506, Cys1509-Cys1524, Cys1527-Cys1539, Cys1529-Cys1546, Cys1548-Cys1557, and Cys1560-Cys1571. Laminin EGF-like domains lie at 1420–1468 (CQCN…DCQQ), 1469–1526 (CACP…SCQE), and 1527–1573 (CECD…ECVF). The segment at 1574–2144 (CGDECTGLLL…NQARKQANSI (571 aa)) is domain II and I. 12 N-linked (GlcNAc...) asparagine glycosylation sites follow: Asn1597, Asn1614, Asn1700, Asn1810, Asn1901, Asn1916, Asn1920, Asn2017, Asn2028, Asn2045, Asn2126, and Asn2240. A coiled-coil region spans residues 1630–2150 (ERLIQLAEGN…ANSIKVSVSS (521 aa)). Laminin G-like domains follow at residues 2145–2328 (KVSV…CKGC), 2340–2521 (TIQF…TKGC), 2526–2710 (VYTV…IGRC), 2763–2934 (SKQF…VGTC), and 2939–3110 (QRGT…KALE). A disulfide bridge links Cys2302 with Cys2328. N-linked (GlcNAc...) asparagine glycans are attached at residues Asn2360, Asn2435, and Asn2478. Cys2495 and Cys2521 form a disulfide bridge. N-linked (GlcNAc...) asparagine glycosylation is found at Asn2551, Asn2558, and Asn2648. A disulfide bridge links Cys2683 with Cys2710. Residues Asn2868 and Asn2893 are each glycosylated (N-linked (GlcNAc...) asparagine). The cysteines at positions 2909 and 2934 are disulfide-linked. Residues 3043 to 3060 (GNQVEAQSPNPASTSADT) show a composition bias toward polar residues. The interval 3043 to 3063 (GNQVEAQSPNPASTSADTNDP) is disordered.

Laminin is a complex glycoprotein, consisting of three different polypeptide chains (alpha, beta, gamma), which are bound to each other by disulfide bonds into a cross-shaped molecule comprising one long and three short arms with globules at each end. Alpha-2 is a subunit of laminin-2 (laminin-211 or merosin), laminin-4 (laminin-221 or S-merosin) and laminin-12 (laminin-213). Interacts with FBLN1, FBLN2 and NID2. As to expression, placenta, striated muscle, peripheral nerve, cardiac muscle, pancreas, lung, spleen, kidney, adrenal gland, skin, testis, meninges, choroid plexus, and some other regions of the brain; not in liver, thymus and bone.

The protein localises to the secreted. Its subcellular location is the extracellular space. It is found in the extracellular matrix. It localises to the basement membrane. Functionally, binding to cells via a high affinity receptor, laminin is thought to mediate the attachment, migration and organization of cells into tissues during embryonic development by interacting with other extracellular matrix components. In Homo sapiens (Human), this protein is Laminin subunit alpha-2 (LAMA2).